Reading from the N-terminus, the 185-residue chain is Ribosome-recycling factor (185 aa).

Residues 137–158 form a disordered region; sequence DELKKLEKDHTASEDEVKRAQD.

It belongs to the RRF family.

It is found in the cytoplasm. Responsible for the release of ribosomes from messenger RNA at the termination of protein biosynthesis. May increase the efficiency of translation by recycling ribosomes from one round of translation to another. This chain is Ribosome-recycling factor, found in Desulfitobacterium hafniense (strain Y51).